An 878-amino-acid polypeptide reads, in one-letter code: Phosphoenolpyruvate carboxylase (878 aa).

Active-site residues include His-137 and Lys-545.

The protein belongs to the PEPCase type 1 family. Mg(2+) is required as a cofactor.

It catalyses the reaction oxaloacetate + phosphate = phosphoenolpyruvate + hydrogencarbonate. Forms oxaloacetate, a four-carbon dicarboxylic acid source for the tricarboxylic acid cycle. This is Phosphoenolpyruvate carboxylase from Proteus mirabilis (strain HI4320).